A 393-amino-acid chain; its full sequence is MSLDRVDWPHATFSTPVKRIFDTQTTLDFQSSLAIHRIKYHLHKYTTLISHCSDPDPHATASSIAMVNGLMGVLDKLAHLIDETPPLPGPRRYGNLACREWHHKLDERLPQWLQEMLPSEYHEVVPELQYYLGNSFGSSTRLDYGTGHELSFMATVAALDMLGMFPHMRGADVFLLFNKYYTIMRRLILTYTLEPAGSHGVWGLDDHFHLVYILGSSQWQLLDAQAPLQPREILDKSLVREYKDTNFYCQGINFINEVKMGPFEEHSPILYDIAVTVPRWSKVCKGLLKMYSVEVLKKFPVVQHFWFGTGFFPWVNIQNGTDLPVFEEKEEESIEQANAGSPGREQTSTRFPTSTSMPPPGVPPSGNNINYLLSHQNQSHRNQTSFSRDRLRR.

Residues 328 to 393 (EKEEESIEQA…TSFSRDRLRR (66 aa)) form a disordered region. Polar residues-rich tracts occupy residues 335 to 356 (EQAN…TSTS) and 365 to 386 (SGNN…QTSF). Serine 341 is modified (phosphoserine).

Belongs to the PTPA-type PPIase family. Interacts with the phosphatase PP2A-like catalytic subunits PPG1, PPH3 and SIT4. Forms a ternary complex with SIT4-TAP42.

Its subcellular location is the cytoplasm. The protein localises to the nucleus. It catalyses the reaction [protein]-peptidylproline (omega=180) = [protein]-peptidylproline (omega=0). In terms of biological role, PPIases accelerate the folding of proteins. It catalyzes the cis-trans isomerization of proline imidic peptide bonds in oligopeptides. Acts as a regulatory subunit for TAP42-associated PP2A-like phosphatases modulating their activity or substrate specificity, probably by inducing a conformational change in the catalytic subunit, a direct target of the PPIase. Can reactivate inactive phosphatase PP2A-phosphatase methylesterase complexes (PP2Ai) in presence of ATP and Mg(2+) by dissociating the inactive form from the complex. Involved in the regulation of cell cycle progression, mitotic spindle formation, bud morphogenesis and DNA repair. The polypeptide is Serine/threonine-protein phosphatase 2A activator 1 (RRD1) (Saccharomyces cerevisiae (strain ATCC 204508 / S288c) (Baker's yeast)).